The primary structure comprises 111 residues: uncharacterized protein (111 aa).

This is an uncharacterized protein from Enterococcus faecalis (strain ATCC 700802 / V583).